A 191-amino-acid polypeptide reads, in one-letter code: Probable rho GDP-dissociation inhibitor (191 aa).

The tract at residues 1–22 (MSDHENTGENTSEYQYKQPPQK) is disordered. Over residues 8–21 (GENTSEYQYKQPPQ) the composition is skewed to polar residues.

The protein belongs to the Rho GDI family.

It is found in the cytoplasm. Regulates the GDP/GTP exchange reaction of the Rho proteins by inhibiting the dissociation of GDP from them, and the subsequent binding of GTP to them. In Caenorhabditis elegans, this protein is Probable rho GDP-dissociation inhibitor (rhi-1).